The sequence spans 259 residues: Light-harvesting complex stress-related protein 3.1, chloroplastic (259 aa).

The N-terminal 45 residues, 1 to 45 (MLANVVSRKASGLRQTPARATVAVKSVSGRRTTAAEPQTAAPVAA), are a transit peptide targeting the chloroplast. Tyr51 contacts chlorophyll b. Positions 66, 87, and 90 each coordinate chlorophyll a. Arg92 contacts chlorophyll b. A helical transmembrane segment spans residues 93-113 (VAMLAALGFVVGEQLQDFPLF). Residue Gln130 coordinates chlorophyll a. A helical membrane pass occupies residues 137-157 (EPLLIAIGVAESYRVAVGWAT). Residues Glu147 and Arg150 each coordinate chlorophyll b. Residues Lys196, Glu197, Asn200, Arg202, and Gln214 each coordinate chlorophyll a. A helical transmembrane segment spans residues 203-223 (LAMIAIAAFVAQELVEQTEIF).

It belongs to the light-harvesting chlorophyll a/b-binding (LHC) protein family. Interacts with the photosystem II-light-harvesting complex II (PSII-LHCII) supercomplex to form PSII-LHCII-LHCSR3 supercomplex.

Its subcellular location is the plastid. It localises to the chloroplast thylakoid membrane. Functionally, required for non-photochemical quenching (NPQ), a mechanism that converts and dissipates the harmful excess absorbed light energy into heat and protect the photosynthetic apparatus from photo-oxidative damage. NPQ includes dissipating excess light energy to heat (qE) and the reversible coupling of LHCII to photosystems (state transitions or qT), which are considered separate NPQ mechanisms. Is responsible for most of the excess light energy to heat dissipation (qE), also known as energy-dependent chlorophyll fluorescence quenching activity of chlorophyll excited states. Involved in a de-coupling and re-coupling of energy transfer to photosystem II (PSII) during qT. Binds chlorophyll a and b. Is able to sense luminal acidification of the thylakoid membranes, which occurs along with elevated electron flow caused by excess light. Establishes interactions with photosystem II (PSII) antenna components upon lumen acidification, and protonation of lumen-exposed, negatively charged residues both in LHCSR3 and in PSII antenna components. Mediates excitation energy transfer from light-harvesting complex II (LHCII) to photosystem I (PSI), rather than photosystem II (PSII), at low pH, which mimics the acidified lumen of the thylakoid membranes in high light-exposed chloroplasts. Activates PSI-dependent fluorescence quenching in addition to dissipating excitation energy in LHCII to avoid photooxidative stress under excess light. Contributes with PGRL1 to the regulation of electron flow upstream of photosystem I (PSI), and limits the accumulation of electrons on the PSI acceptor side, thus avoiding PSI photoinhibition. This is Light-harvesting complex stress-related protein 3.1, chloroplastic from Chlamydomonas reinhardtii (Chlamydomonas smithii).